Consider the following 391-residue polypeptide: Heme A synthase (391 aa).

8 consecutive transmembrane segments (helical) span residues 37 to 57 (IRLW…VGGL), 121 to 141 (RQLG…FLVA), 152 to 172 (LLAL…MVAS), 186 to 206 (LAVH…QALL), 229 to 249 (TTVL…VAGI), 298 to 318 (FLHR…WIFG), 332 to 352 (LLAL…LSAA), and 354 to 374 (WQVA…ILHA). His300 serves as a coordination point for heme. Residue His360 participates in heme binding.

This sequence belongs to the COX15/CtaA family. Type 2 subfamily. Interacts with CtaB. Heme b is required as a cofactor.

Its subcellular location is the cell membrane. It carries out the reaction Fe(II)-heme o + 2 A + H2O = Fe(II)-heme a + 2 AH2. It functions in the pathway porphyrin-containing compound metabolism; heme A biosynthesis; heme A from heme O: step 1/1. In terms of biological role, catalyzes the conversion of heme O to heme A by two successive hydroxylations of the methyl group at C8. The first hydroxylation forms heme I, the second hydroxylation results in an unstable dihydroxymethyl group, which spontaneously dehydrates, resulting in the formyl group of heme A. This Cereibacter sphaeroides (strain ATCC 17025 / ATH 2.4.3) (Rhodobacter sphaeroides) protein is Heme A synthase.